A 638-amino-acid polypeptide reads, in one-letter code: Acetolactate synthase 1, chloroplastic (638 aa).

Over residues methionine 1–proline 19 the composition is skewed to low complexity. Positions methionine 1–arginine 23 are disordered. A chloroplast-targeting transit peptide spans methionine 1–arginine 39. Position 112 (glutamate 112) interacts with thiamine diphosphate. A disulfide bond links cysteine 132 and cysteine 278. FAD-binding positions include arginine 214, histidine 320 to arginine 341, and aspartate 363 to aspartate 382. The interval glutamine 455–histidine 535 is thiamine pyrophosphate binding. Residues aspartate 506 and asparagine 533 each contribute to the Mg(2+) site.

Belongs to the TPP enzyme family. Mg(2+) serves as cofactor. It depends on thiamine diphosphate as a cofactor.

It localises to the plastid. It is found in the chloroplast. It catalyses the reaction 2 pyruvate + H(+) = (2S)-2-acetolactate + CO2. It functions in the pathway amino-acid biosynthesis; L-isoleucine biosynthesis; L-isoleucine from 2-oxobutanoate: step 1/4. It participates in amino-acid biosynthesis; L-valine biosynthesis; L-valine from pyruvate: step 1/4. The protein is Acetolactate synthase 1, chloroplastic (ALS1) of Zea mays (Maize).